A 642-amino-acid polypeptide reads, in one-letter code: Sodium- and chloride-dependent neutral and basic amino acid transporter B(0+) (642 aa).

Topologically, residues 1–44 are cytoplasmic; that stretch reads MDKLKCPSFFKCREKEKVSASSENFHVGENDENQDRGNWSKKSD. 3 helical membrane passes run 45–65, 72–92, and 110–130; these read YLLS…FPYL, GAFL…LFFL, and ILPL…FVTI. Topologically, residues 131–234 are extracellular; the sequence is YYNVIIAYSL…RSSGMNETGV (104 aa). Residues N155, N163, N174, N189, N197, N202, and N230 are each glycosylated (N-linked (GlcNAc...) asparagine). The next 2 membrane-spanning stretches (helical) occupy residues 235-255 and 261-281; these read IVWY…AALF and SGKV…ILLV. N-linked (GlcNAc...) asparagine glycosylation occurs at N302. Transmembrane regions (helical) follow at residues 315–335, 348–368, 399–419, 450–477, 480–500, 528–548, and 563–583; these read AATQ…ALSS, IVVC…IFSI, LAQL…LLTL, ITLG…VHLI, FCAG…IIWI, CWFV…LVQF, and VALG…MAII. Residues 584 to 642 lie on the Cytoplasmic side of the membrane; sequence KIIQAKGNIFQRLISCCRPASNWGPYLEQHRGERYKDMVDPKKEADHEIPTVSGSRKPE. Over residues 622–632 the composition is skewed to basic and acidic residues; the sequence is VDPKKEADHEI. A disordered region spans residues 622–642; sequence VDPKKEADHEIPTVSGSRKPE.

This sequence belongs to the sodium:neurotransmitter symporter (SNF) (TC 2.A.22) family. SLC6A14 subfamily. Levels are highest in adult and fetal lung, in trachea and salivary gland. Lower levels detected in mammary gland, stomach and pituitary gland, and very low levels in colon, uterus, prostate and testis.

The protein localises to the membrane. It is found in the apical cell membrane. It catalyses the reaction glycine(out) + chloride(out) + 2 Na(+)(out) = glycine(in) + chloride(in) + 2 Na(+)(in). The catalysed reaction is L-leucine(out) + chloride(out) + 2 Na(+)(out) = L-leucine(in) + chloride(in) + 2 Na(+)(in). The enzyme catalyses L-glutamine(out) + chloride(out) + 2 Na(+)(out) = L-glutamine(in) + chloride(in) + 2 Na(+)(in). It carries out the reaction L-arginine(out) + chloride(out) + 2 Na(+)(out) = L-arginine(in) + chloride(in) + 2 Na(+)(in). It catalyses the reaction (R)-carnitine(out) + chloride(out) + 2 Na(+)(out) = (R)-carnitine(in) + chloride(in) + 2 Na(+)(in). The catalysed reaction is O-butanoyl-(R)-carnitine(out) + chloride(out) + 2 Na(+)(out) = O-butanoyl-(R)-carnitine(in) + chloride(in) + 2 Na(+)(in). The enzyme catalyses O-propanoyl-(R)-carnitine(out) + chloride(out) + 2 Na(+)(out) = O-propanoyl-(R)-carnitine(in) + chloride(in) + 2 Na(+)(in). It carries out the reaction L-isoleucine(out) + chloride(out) + 2 Na(+)(out) = L-isoleucine(in) + chloride(in) + 2 Na(+)(in). It catalyses the reaction L-methionine(out) + chloride(out) + 2 Na(+)(out) = L-methionine(in) + chloride(in) + 2 Na(+)(in). The catalysed reaction is L-valine(out) + chloride(out) + 2 Na(+)(out) = L-valine(in) + chloride(in) + 2 Na(+)(in). The enzyme catalyses L-alanine(out) + chloride(out) + 2 Na(+)(out) = L-alanine(in) + chloride(in) + 2 Na(+)(in). It carries out the reaction L-serine(out) + chloride(out) + 2 Na(+)(out) = L-serine(in) + chloride(in) + 2 Na(+)(in). It catalyses the reaction L-cysteine(out) + chloride(out) + 2 Na(+)(out) = L-cysteine(in) + chloride(in) + 2 Na(+)(in). The catalysed reaction is L-asparagine(out) + chloride(out) + 2 Na(+)(out) = L-asparagine(in) + chloride(in) + 2 Na(+)(in). The enzyme catalyses L-threonine(out) + chloride(out) + 2 Na(+)(out) = L-threonine(in) + chloride(in) + 2 Na(+)(in). It carries out the reaction L-phenylalanine(out) + chloride(out) + 2 Na(+)(out) = L-phenylalanine(in) + chloride(in) + 2 Na(+)(in). It catalyses the reaction L-tryptophan(out) + chloride(out) + 2 Na(+)(out) = L-tryptophan(in) + chloride(in) + 2 Na(+)(in). The catalysed reaction is L-tyrosine(out) + chloride(out) + 2 Na(+)(out) = L-tyrosine(in) + chloride(in) + 2 Na(+)(in). The enzyme catalyses L-histidine(out) + chloride(out) + 2 Na(+)(out) = L-histidine(in) + chloride(in) + 2 Na(+)(in). It carries out the reaction L-lysine(out) + chloride(out) + 2 Na(+)(out) = L-lysine(in) + chloride(in) + 2 Na(+)(in). It catalyses the reaction beta-alanine(out) + chloride(out) + 2 Na(+)(out) = beta-alanine(in) + chloride(in) + 2 Na(+)(in). Functionally, amino acid transporter that plays an important role in the absorption of amino acids in the intestinal tract. Mediates the uptake of a broad range of neutral and cationic amino acids (with the exception of proline) in a Na(+)/Cl(-)-dependent manner. Transports non-alpha-amino acids such as beta-alanine with low affinity, and has a higher affinity for dipolar and cationic amino acids such as leucine and lysine. Can also transport carnitine, butirylcarnitine and propionylcarnitine coupled to the transmembrane gradients of Na(+) and Cl(-). The protein is Sodium- and chloride-dependent neutral and basic amino acid transporter B(0+) of Homo sapiens (Human).